The primary structure comprises 456 residues: Adenylosuccinate synthetase (456 aa).

GTP-binding positions include 11 to 17 (GDEGKGG) and 39 to 41 (GHT). D12 serves as the catalytic Proton acceptor. Residues D12 and G39 each contribute to the Mg(2+) site. IMP-binding positions include 12-15 (DEGK), 37-40 (NAGH), T127, R141, Q232, T247, and R328. H40 functions as the Proton donor in the catalytic mechanism. 324-330 (TVTGRPR) serves as a coordination point for substrate. GTP is bound by residues R330, 356 to 358 (HLD), and 441 to 443 (GVG).

It belongs to the adenylosuccinate synthetase family. As to quaternary structure, homodimer. It depends on Mg(2+) as a cofactor.

The protein localises to the cytoplasm. It carries out the reaction IMP + L-aspartate + GTP = N(6)-(1,2-dicarboxyethyl)-AMP + GDP + phosphate + 2 H(+). It participates in purine metabolism; AMP biosynthesis via de novo pathway; AMP from IMP: step 1/2. Its function is as follows. Plays an important role in the de novo pathway of purine nucleotide biosynthesis. Catalyzes the first committed step in the biosynthesis of AMP from IMP. This chain is Adenylosuccinate synthetase, found in Natronomonas pharaonis (strain ATCC 35678 / DSM 2160 / CIP 103997 / JCM 8858 / NBRC 14720 / NCIMB 2260 / Gabara) (Halobacterium pharaonis).